Here is a 567-residue protein sequence, read N- to C-terminus: Malate synthase, glyoxysomal (567 aa).

The active-site Proton acceptor is the Arg182. The active-site Proton donor is the Asp468. Positions 565 to 567 match the Microbody targeting signal motif; that stretch reads SKL.

This sequence belongs to the malate synthase family.

Its subcellular location is the glyoxysome. It carries out the reaction glyoxylate + acetyl-CoA + H2O = (S)-malate + CoA + H(+). It participates in carbohydrate metabolism; glyoxylate cycle; (S)-malate from isocitrate: step 2/2. The sequence is that of Malate synthase, glyoxysomal from Gossypium hirsutum (Upland cotton).